Reading from the N-terminus, the 1736-residue chain is Centrosomal protein of 152 kDa (1736 aa).

Positions 1-60 (MSLEFGSVALQTQNEDEEFDKEDFEREKELQQLLTDLPHDMLDDELSSPERHDSDCSMDG) are interaction with PLK4. Residues 1 to 127 (MSLEFGSVAL…SGYSPPGKRE (127 aa)) are disordered. Composition is skewed to basic and acidic residues over residues 61–82 (RAAE…DILP) and 94–105 (EENRSKTEDQHL). Coiled coils occupy residues 228–481 (IIQL…AELG), 552–651 (HLVS…QEFD), 692–776 (LEVY…TERQ), 835–868 (AAVS…ALRK), 950–1075 (NVMS…YEED), and 1205–1315 (GHCF…KIKR). The interval 571 to 592 (FQQSKDGDSGMETKTDTSEKTT) is disordered. Residues 575-592 (KDGDSGMETKTDTSEKTT) are compositionally biased toward basic and acidic residues. At Thr-1277 the chain carries Phosphothreonine. Disordered stretches follow at residues 1416-1479 (GTER…ASTA), 1543-1562 (EKNS…LRSP), 1574-1614 (GSPT…SDST), and 1677-1736 (QQGK…SPLE). The span at 1462-1473 (RRLEESKHREMR) shows a compositional bias: basic and acidic residues. Composition is skewed to polar residues over residues 1576–1595 (PTET…SQDS) and 1603–1614 (PSSSPAWPSDST). At Lys-1714 the chain carries N6-acetyllysine.

Belongs to the CEP152 family. In terms of assembly, interacts (via N-terminus) with PLK4; the interaction is mutally exclusive with a PLK4:CEP192 interaction. Interacts (via C-terminus) with CPAP (via-N-terminus). Interacts with CINP. Interacts with CDK5RAP2, WDR62, CEP63 and CEP131. CEP63, CDK5RAP2, CEP152, WDR62 are proposed to form a stepwise assembled complex at the centrosome forming a ring near parental centrioles. Interacts with DEUP1; this interaction recruits CEP152 to the deuterosome. The interactions with CEP63 and DEUP1 are mutually exclusive. Interacts with CCDC66.

It localises to the cytoplasm. It is found in the cytoskeleton. The protein resides in the microtubule organizing center. The protein localises to the centrosome. Its subcellular location is the centriole. In terms of biological role, necessary for centrosome duplication; the function also seems to involve CEP63, CDK5RAP2 and WDR62 through a stepwise assembled complex at the centrosome that recruits CDK2 required for centriole duplication. Acts as a molecular scaffold facilitating the interaction of PLK4 and CPAP, 2 molecules involved in centriole formation. Proposed to snatch PLK4 away from PLK4:CEP92 complexes in early G1 daughter centriole and to reposition PLK4 at the outer boundary of a newly forming CEP152 ring structure. Also plays a key role in deuterosome-mediated centriole amplification in multiciliated that can generate more than 100 centrioles. Overexpression of cep152 can drive amplification of centrioles. In Mus musculus (Mouse), this protein is Centrosomal protein of 152 kDa (Cep152).